The chain runs to 185 residues: Elongation factor P (185 aa).

The protein belongs to the elongation factor P family.

The protein resides in the cytoplasm. Its pathway is protein biosynthesis; polypeptide chain elongation. Functionally, involved in peptide bond synthesis. Stimulates efficient translation and peptide-bond synthesis on native or reconstituted 70S ribosomes in vitro. Probably functions indirectly by altering the affinity of the ribosome for aminoacyl-tRNA, thus increasing their reactivity as acceptors for peptidyl transferase. This chain is Elongation factor P, found in Pelotomaculum thermopropionicum (strain DSM 13744 / JCM 10971 / SI).